Reading from the N-terminus, the 194-residue chain is uncharacterized protein (194 aa).

CBS domains lie at 13-72 (MSFP…PKDV) and 78-133 (MSKK…LLEI). Positions 159 to 192 (YINGICENCGYQGRVRLYQGRYLCDECIEEFEEK) constitute an ACP-type MB domain. Fe cation contacts are provided by cysteine 164, cysteine 167, cysteine 182, and cysteine 185. Zn(2+) is bound by residues cysteine 164, cysteine 167, cysteine 182, and cysteine 185.

This is an uncharacterized protein from Methanocaldococcus jannaschii (strain ATCC 43067 / DSM 2661 / JAL-1 / JCM 10045 / NBRC 100440) (Methanococcus jannaschii).